Reading from the N-terminus, the 900-residue chain is DNA mismatch repair protein MutS (900 aa).

The tract at residues Met1 to Asp88 is disordered. Over residues Ala56 to Asn68 the composition is skewed to basic and acidic residues. Gly714–Ser721 lines the ATP pocket.

It belongs to the DNA mismatch repair MutS family.

Its function is as follows. This protein is involved in the repair of mismatches in DNA. It is possible that it carries out the mismatch recognition step. This protein has a weak ATPase activity. This chain is DNA mismatch repair protein MutS, found in Parasynechococcus marenigrum (strain WH8102).